The following is a 98-amino-acid chain: U-megalopygitoxin(1)-Mo1 (98 aa).

The signal sequence occupies residues 1 to 17 (MYRETFVFCVLLAVVSA).

It belongs to the caterpillar 1 family. In terms of processing, contains 4 disulfide bonds. Expressed by the venom apparatus.

Its subcellular location is the secreted. Its function is as follows. Probable toxin. In Megalopyge opercularis (Southern flannel moth), this protein is U-megalopygitoxin(1)-Mo1.